The chain runs to 199 residues: Pyridoxine/pyridoxamine 5'-phosphate oxidase (199 aa).

Residues 45-50 (RVVLLK), 60-61 (FT), Arg66, Lys67, and Gln89 contribute to the FMN site. Lys50 lines the substrate pocket. Substrate-binding residues include Tyr107, Arg111, and Ser115. FMN-binding positions include 124 to 125 (QS) and Trp169. 175-177 (RIH) is a binding site for substrate. Arg179 lines the FMN pocket.

It belongs to the pyridoxamine 5'-phosphate oxidase family. Homodimer. FMN is required as a cofactor.

It carries out the reaction pyridoxamine 5'-phosphate + O2 + H2O = pyridoxal 5'-phosphate + H2O2 + NH4(+). The catalysed reaction is pyridoxine 5'-phosphate + O2 = pyridoxal 5'-phosphate + H2O2. It participates in cofactor metabolism; pyridoxal 5'-phosphate salvage; pyridoxal 5'-phosphate from pyridoxamine 5'-phosphate: step 1/1. The protein operates within cofactor metabolism; pyridoxal 5'-phosphate salvage; pyridoxal 5'-phosphate from pyridoxine 5'-phosphate: step 1/1. Its function is as follows. Catalyzes the oxidation of either pyridoxine 5'-phosphate (PNP) or pyridoxamine 5'-phosphate (PMP) into pyridoxal 5'-phosphate (PLP). The chain is Pyridoxine/pyridoxamine 5'-phosphate oxidase from Ehrlichia chaffeensis (strain ATCC CRL-10679 / Arkansas).